Consider the following 378-residue polypeptide: Fructose-1,6-bisphosphatase class 1 2 (378 aa).

Glu98, Asp120, Leu122, and Asp123 together coordinate Mg(2+). Substrate contacts are provided by residues 123 to 126 (DGSS) and Asn227. Glu299 is a binding site for Mg(2+).

The protein belongs to the FBPase class 1 family. As to quaternary structure, homotetramer. Requires Mg(2+) as cofactor.

It localises to the cytoplasm. It catalyses the reaction beta-D-fructose 1,6-bisphosphate + H2O = beta-D-fructose 6-phosphate + phosphate. Its pathway is carbohydrate biosynthesis; gluconeogenesis. The polypeptide is Fructose-1,6-bisphosphatase class 1 2 (Paraburkholderia xenovorans (strain LB400)).